Reading from the N-terminus, the 245-residue chain is tRNA pseudouridine synthase A 2 (245 aa).

The active-site Nucleophile is D53. Residue Y111 participates in substrate binding.

Belongs to the tRNA pseudouridine synthase TruA family. In terms of assembly, homodimer.

The catalysed reaction is uridine(38/39/40) in tRNA = pseudouridine(38/39/40) in tRNA. Its function is as follows. Formation of pseudouridine at positions 38, 39 and 40 in the anticodon stem and loop of transfer RNAs. This chain is tRNA pseudouridine synthase A 2, found in Bacillus cereus (strain ZK / E33L).